We begin with the raw amino-acid sequence, 355 residues long: 5-formaminoimidazole-4-carboxamide-1-(beta)-D-ribofuranosyl 5'-monophosphate synthetase (355 aa).

Residues histidine 27 and serine 94 each contribute to the 5-amino-1-(5-phospho-beta-D-ribosyl)imidazole-4-carboxamide site. One can recognise an ATP-grasp domain in the interval 101-332 (TESFAELAVP…YSDMIEENLS (232 aa)). Residues 144–195 (PEKI…TRYY) and glutamate 225 contribute to the ATP site. Residue asparagine 254 participates in 5-amino-1-(5-phospho-beta-D-ribosyl)imidazole-4-carboxamide binding. Positions 292 and 305 each coordinate Mg(2+).

This sequence belongs to the phosphohexose mutase family. Mg(2+) is required as a cofactor. Requires Mn(2+) as cofactor.

It carries out the reaction 5-amino-1-(5-phospho-beta-D-ribosyl)imidazole-4-carboxamide + formate + ATP = 5-formamido-1-(5-phospho-D-ribosyl)imidazole-4-carboxamide + ADP + phosphate. The protein operates within purine metabolism; IMP biosynthesis via de novo pathway; 5-formamido-1-(5-phospho-D-ribosyl)imidazole-4-carboxamide from 5-amino-1-(5-phospho-D-ribosyl)imidazole-4-carboxamide (formate route): step 1/1. Catalyzes the ATP- and formate-dependent formylation of 5-aminoimidazole-4-carboxamide-1-beta-d-ribofuranosyl 5'-monophosphate (AICAR) to 5-formaminoimidazole-4-carboxamide-1-beta-d-ribofuranosyl 5'-monophosphate (FAICAR) in the absence of folates. This chain is 5-formaminoimidazole-4-carboxamide-1-(beta)-D-ribofuranosyl 5'-monophosphate synthetase, found in Methanococcoides burtonii (strain DSM 6242 / NBRC 107633 / OCM 468 / ACE-M).